The chain runs to 142 residues: Potassium voltage-gated channel subfamily E regulatory beta subunit 5 (142 aa).

N-linked (GlcNAc...) asparagine glycans are attached at residues N2 and N25. The helical transmembrane segment at 61–81 (LYILLIMIFYACLAGGLILAY) threads the bilayer. Residues 82–142 (TRSRKLVEAK…PALAQGAERV (61 aa)) lie on the Cytoplasmic side of the membrane. The segment at 119-142 (SQAEGRRQLASEGLPALAQGAERV) is disordered.

It belongs to the potassium channel KCNE family. Interacts with KCNQ1; impairs KCNQ1 localization in lipid rafts and only conducts current upon strong and continued depolarization. In terms of tissue distribution, highly expressed in heart, skeletal muscle, brain, spinal cord and placenta.

The protein resides in the membrane. In terms of biological role, potassium channel ancillary subunit that is essential for generation of some native K(+) currents by virtue of formation of heteromeric ion channel complex with voltage-gated potassium (Kv) channel pore-forming alpha subunits. Functions as an inhibitory beta-subunit of the repolarizing cardiac potassium ion channel KCNQ1. The polypeptide is Potassium voltage-gated channel subfamily E regulatory beta subunit 5 (KCNE5) (Homo sapiens (Human)).